The chain runs to 130 residues: Acyl carrier protein 2, chloroplastic (130 aa).

The N-terminal 48 residues, M1–C48, are a transit peptide targeting the chloroplast. The region spanning P52–Q127 is the Carrier domain. The residue at position 87 (S87) is an O-(pantetheine 4'-phosphoryl)serine.

The protein belongs to the acyl carrier protein (ACP) family. Post-translationally, 4'-phosphopantetheine is transferred from CoA to a specific serine of apo-ACP by acpS. This modification is essential for activity because fatty acids are bound in thioester linkage to the sulfhydryl of the prosthetic group. In terms of tissue distribution, roots, leaves and seeds.

The protein localises to the plastid. The protein resides in the chloroplast. It functions in the pathway lipid metabolism; fatty acid biosynthesis. Carrier of the growing fatty acid chain in fatty acid biosynthesis. The polypeptide is Acyl carrier protein 2, chloroplastic (ACL1.2) (Spinacia oleracea (Spinach)).